Here is a 514-residue protein sequence, read N- to C-terminus: MPTRRLLMRQVREILKLRLDVGLSNRIIAKQLGVGETSVRDTLKRLHREGLTWPLPDTISDRELEQRLYGTPGKKAGRRKQSEPDWSAVARELKRKHVTLQVLWEEYIARDPDGFRYSRYCELFRNWHGRLPLVMRQSHAGGEKLFVDYAGDKVAVVDRKTGVVRDAHIFVAVMGASSLSFALATWSEQLPDWIEAHNAAYRFFGGVTQLLVSDNTKCAVIKACHFDPMVNRSYTDMARHYSTAVFPARPRKPRDKAKVENCVGIVERWLLGRLRNRTFYSLADLNKAIADLITRLNDERVIRQYGKTRRALFDELDAPNLKPLPAEPWVHAEWRRCRVGIDYHIELSRHFYSVPYRFARSEVEVRYTIRTVEIFLGGDRIAAHVRGSSNGRHTTVAVHMPPNHQRYREWTPAKIRSEAKRIGPMLRVLVDRIIEKRAHPEQGYRACVGIIGLERRFGVDRLEAAAQRALEFQVLNYPGIKSILEKELDRLPRSERLEQEPIQHSNLRGSEYYH.

The HTH IS408-type domain maps to 11 to 93 (VREILKLRLD…PDWSAVAREL (83 aa)). One can recognise an Integrase catalytic domain in the interval 128 to 317 (HGRLPLVMRQ…TRRALFDELD (190 aa)).

It belongs to the transposase IS21/IS408/IS1162 family.

This Sinorhizobium fredii (strain NBRC 101917 / NGR234) protein is Putative transposase y4uI.